The primary structure comprises 92 residues: Phosphoribosyl-ATP pyrophosphatase (92 aa).

It belongs to the PRA-PH family.

The protein resides in the cytoplasm. The catalysed reaction is 1-(5-phospho-beta-D-ribosyl)-ATP + H2O = 1-(5-phospho-beta-D-ribosyl)-5'-AMP + diphosphate + H(+). Its pathway is amino-acid biosynthesis; L-histidine biosynthesis; L-histidine from 5-phospho-alpha-D-ribose 1-diphosphate: step 2/9. In Leptospira interrogans serogroup Icterohaemorrhagiae serovar copenhageni (strain Fiocruz L1-130), this protein is Phosphoribosyl-ATP pyrophosphatase.